The sequence spans 387 residues: MSAFDPGQPQHLGIEEEYLLTDLQSRCMVAEPPPEVLRDCREALGQNFAYEMFQGQIEVASPVFDHSAQAGAYLRQVRSALDQALASHGLGFICAGSHPLADWHEQRATPQAHFRQLFNEFALAARRSVLSGLHVHAQVPAAVDRIAVMNEVLPWTPLLLALSLSSPFWQGHDSGYLSYRQVACDEWPRMGIPEYLHDHQAFDDYLRLLRGIGALGAEDNAWWGIRPALRYPTLELRMTDACPRVADAQTLAGLFAVMVRHACLLPAAGSQYTQAQRWLLKENRVQARRRGAQGRYLMSPDQAPMNLGQWLELAEQVFGDTAQALGEEPLFERARQLLRGGCSAERQLSCHAAQPAESDREARCRAVVDLLLWESRDSEPESTNAPP.

It belongs to the glutamate--cysteine ligase type 2 family. YbdK subfamily.

It catalyses the reaction L-cysteine + L-glutamate + ATP = gamma-L-glutamyl-L-cysteine + ADP + phosphate + H(+). ATP-dependent carboxylate-amine ligase which exhibits weak glutamate--cysteine ligase activity. This is Putative glutamate--cysteine ligase 2 from Pseudomonas fluorescens (strain ATCC BAA-477 / NRRL B-23932 / Pf-5).